The chain runs to 328 residues: Transcription initiation factor IIE subunit beta (328 aa).

The interval 32–105 is disordered; that stretch reads QKKTNDTVIT…SSPSKKVRPG (74 aa). At Ser-52 the chain carries Phosphoserine. Positions 85 to 94 are enriched in acidic residues; it reads LDDDDDDEDF. A phosphoserine mark is found at Ser-97 and Ser-106. Residues 113–187 constitute a DNA-binding region (TFIIE beta); the sequence is QANQTDISKS…FKYLSTYDVH (75 aa).

It belongs to the TFIIE beta subunit family. In terms of assembly, TFIIE is a tetramer of two alpha (TFA1) and two beta (TFA2) subunits.

Its subcellular location is the nucleus. Functionally, recruits TFIIH to the initiation complex and stimulates the RNA polymerase II C-terminal domain kinase and DNA-dependent ATPase activities of TFIIH. Both TFIIH and TFIIE are required for promoter clearance by RNA polymerase. This Saccharomyces cerevisiae (strain ATCC 204508 / S288c) (Baker's yeast) protein is Transcription initiation factor IIE subunit beta (TFA2).